Reading from the N-terminus, the 122-residue chain is Small ribosomal subunit protein uS13 (122 aa).

A disordered region spans residues 92 to 122 (HRRGLPVRGQRTHTNARTRKGPAKPIAGKKK).

The protein belongs to the universal ribosomal protein uS13 family. Part of the 30S ribosomal subunit. Forms a loose heterodimer with protein S19. Forms two bridges to the 50S subunit in the 70S ribosome.

Located at the top of the head of the 30S subunit, it contacts several helices of the 16S rRNA. In the 70S ribosome it contacts the 23S rRNA (bridge B1a) and protein L5 of the 50S subunit (bridge B1b), connecting the 2 subunits; these bridges are implicated in subunit movement. Contacts the tRNAs in the A and P-sites. The polypeptide is Small ribosomal subunit protein uS13 (Paracoccus denitrificans (strain Pd 1222)).